Here is a 500-residue protein sequence, read N- to C-terminus: Aspartyl/glutamyl-tRNA(Asn/Gln) amidotransferase subunit B (500 aa).

This sequence belongs to the GatB/GatE family. GatB subfamily. In terms of assembly, heterotrimer of A, B and C subunits.

It carries out the reaction L-glutamyl-tRNA(Gln) + L-glutamine + ATP + H2O = L-glutaminyl-tRNA(Gln) + L-glutamate + ADP + phosphate + H(+). The catalysed reaction is L-aspartyl-tRNA(Asn) + L-glutamine + ATP + H2O = L-asparaginyl-tRNA(Asn) + L-glutamate + ADP + phosphate + 2 H(+). Functionally, allows the formation of correctly charged Asn-tRNA(Asn) or Gln-tRNA(Gln) through the transamidation of misacylated Asp-tRNA(Asn) or Glu-tRNA(Gln) in organisms which lack either or both of asparaginyl-tRNA or glutaminyl-tRNA synthetases. The reaction takes place in the presence of glutamine and ATP through an activated phospho-Asp-tRNA(Asn) or phospho-Glu-tRNA(Gln). This is Aspartyl/glutamyl-tRNA(Asn/Gln) amidotransferase subunit B from Sinorhizobium fredii (strain NBRC 101917 / NGR234).